The sequence spans 238 residues: Purine nucleoside phosphorylase DeoD-type (238 aa).

His4 contacts a purine D-ribonucleoside. Residues Gly20, Arg24, Arg43, and 87–90 each bind phosphate; that span reads RVGS. A purine D-ribonucleoside contacts are provided by residues 179-181 and 203-204; these read EME and SD. Asp204 serves as the catalytic Proton donor.

The protein belongs to the PNP/UDP phosphorylase family. As to quaternary structure, homohexamer; trimer of homodimers.

It catalyses the reaction a purine D-ribonucleoside + phosphate = a purine nucleobase + alpha-D-ribose 1-phosphate. The catalysed reaction is a purine 2'-deoxy-D-ribonucleoside + phosphate = a purine nucleobase + 2-deoxy-alpha-D-ribose 1-phosphate. Functionally, catalyzes the reversible phosphorolytic breakdown of the N-glycosidic bond in the beta-(deoxy)ribonucleoside molecules, with the formation of the corresponding free purine bases and pentose-1-phosphate. The polypeptide is Purine nucleoside phosphorylase DeoD-type (Histophilus somni (strain 2336) (Haemophilus somnus)).